Here is a 423-residue protein sequence, read N- to C-terminus: Levansucrase (423 aa).

Sucrose contacts are provided by Trp47, Asp48, Ser119, Arg193, and Asp194. The Nucleophile role is filled by Asp48. Glu278 acts as the Proton donor/acceptor in catalysis.

Belongs to the glycosyl hydrolase 68 family.

The protein localises to the secreted. The catalysed reaction is [6)-beta-D-fructofuranosyl-(2-&gt;](n) alpha-D-glucopyranoside + sucrose = [6)-beta-D-fructofuranosyl-(2-&gt;](n+1) alpha-D-glucopyranoside + D-glucose. Its function is as follows. Catalyzes the synthesis of levan, a fructose polymer, by transferring the fructosyl moiety from sucrose to a growing acceptor molecule. In Zymomonas mobilis subsp. mobilis (strain ATCC 10988 / DSM 424 / LMG 404 / NCIMB 8938 / NRRL B-806 / ZM1), this protein is Levansucrase.